We begin with the raw amino-acid sequence, 255 residues long: Small ribosomal subunit protein uS2 (255 aa).

It belongs to the universal ribosomal protein uS2 family.

In Streptococcus thermophilus (strain CNRZ 1066), this protein is Small ribosomal subunit protein uS2.